A 149-amino-acid chain; its full sequence is Transthyretin (149 aa).

The first 20 residues, 1-20, serve as a signal peptide directing secretion; that stretch reads MAFHSLLLLCLAGLLFVSEA. C32 is subject to Sulfocysteine. K37 is a binding site for L-thyroxine. 4-carboxyglutamate is present on E64. L-thyroxine is bound by residues E76 and S139.

The protein belongs to the transthyretin family. As to quaternary structure, homotetramer. Dimer of dimers. In the homotetramer, subunits assemble around a central channel that can accommodate two ligand molecules. Interacts with RBP4. In terms of processing, sulfonation of the reactive cysteine Cys-32 enhances the stability of the native conformation of TTR, avoiding misassembly of the protein leading to amyloid formation. As to expression, detected in plasma (at protein level). Detected in liver.

It is found in the secreted. In terms of biological role, thyroid hormone-binding protein. Probably transports thyroxine from the bloodstream to the brain. The chain is Transthyretin (TTR) from Petaurus breviceps (Australian sugar glider).